The primary structure comprises 163 residues: Bursicon (163 aa).

An N-terminal signal peptide occupies residues 1–23 (MKSSVCVLLKVLACILLPGGLNA). 5 disulfides stabilise this stretch: C39–C88, C53–C102, C63–C123, C67–C125, and C85–C128. The CTCK domain maps to 39 to 129 (CQVTPVIHVL…PLECMCRPCT (91 aa)).

As to quaternary structure, heterodimer of burs and pburs.

Its subcellular location is the secreted. Its function is as follows. Final heterodimeric neurohormone released at the end of the molting cycle, involved in the sclerotization (tanning) of the insect cuticle, melanization and wing spreading. This chain is Bursicon, found in Aedes aegypti (Yellowfever mosquito).